Here is a 103-residue protein sequence, read N- to C-terminus: SOSS complex subunit C (103 aa).

The protein belongs to the SOSS-C family. In terms of assembly, belongs to the multiprotein complex Integrator. Component of the SOSS complex, composed of SOSS-B (SOSS-B1/NABP2 or SOSS-B2/NABP1), SOSS-A/INTS3 and SOSS-C/INIP.

It localises to the nucleus. Functionally, component of the SOSS complex, a multiprotein complex that functions downstream of the MRN complex to promote DNA repair and G2/M checkpoint. The SOSS complex associates with single-stranded DNA at DNA lesions and influences diverse endpoints in the cellular DNA damage response including cell-cycle checkpoint activation, recombinational repair and maintenance of genomic stability. Required for efficient homologous recombination-dependent repair of double-strand breaks (DSBs). This is SOSS complex subunit C (INIP) from Gallus gallus (Chicken).